A 543-amino-acid chain; its full sequence is Germacrene A synthase (543 aa).

Residues aspartate 296, aspartate 300, aspartate 439, and glutamate 447 each contribute to the Mg(2+) site. Residues 296-300 (DDTYD) carry the DDXXD motif motif.

Belongs to the terpene synthase family. Tpsa subfamily. Mg(2+) is required as a cofactor. Requires Mn(2+) as cofactor. Barely detectable in leaves.

It is found in the plastid. The protein localises to the chloroplast. It catalyses the reaction (2E,6E)-farnesyl diphosphate = germacrene A + diphosphate. It carries out the reaction (2E,6E)-farnesyl diphosphate = (1S,2S,4R)-beta-elemene + diphosphate. The protein operates within secondary metabolite biosynthesis; terpenoid biosynthesis. Sesquiterpene synthase involved in the biosynthesis of volatile compounds widely used in aromatherapy and folk medicine, and present in culinary herbs. Mediates the conversion of (2E,6E)-farnesyl diphosphate (FPP) into germacrene A and beta-elemene. Not able to use (2E)-geranyl diphosphate (GPP) as substrate. The chain is Germacrene A synthase from Lavandula viridis (Green lavender).